Reading from the N-terminus, the 142-residue chain is Large ribosomal subunit protein uL11 (142 aa).

The protein belongs to the universal ribosomal protein uL11 family. In terms of assembly, part of the ribosomal stalk of the 50S ribosomal subunit. Interacts with L10 and the large rRNA to form the base of the stalk. L10 forms an elongated spine to which L12 dimers bind in a sequential fashion forming a multimeric L10(L12)X complex. Post-translationally, one or more lysine residues are methylated.

Functionally, forms part of the ribosomal stalk which helps the ribosome interact with GTP-bound translation factors. The sequence is that of Large ribosomal subunit protein uL11 from Pseudoalteromonas translucida (strain TAC 125).